Consider the following 462-residue polypeptide: uncharacterized protein (462 aa).

The next 2 membrane-spanning stretches (helical) occupy residues 12–32 (WWWLTFGCARTVTVGFVAPTV) and 257–277 (GLCVDLLVCVLLLALLLLELV).

This sequence belongs to the HHV-5 US29 protein family.

It is found in the host membrane. This is an uncharacterized protein from Human cytomegalovirus (strain AD169) (HHV-5).